The sequence spans 280 residues: Protein phosphatase 1 regulatory subunit 3B-A (280 aa).

The PP1-binding motif signature appears at 58–61; that stretch reads RVSF. The CBM21 domain occupies 121–229; it reads RNRLQADSVC…SNKSLNYKIA (109 aa).

In terms of assembly, interacts with glycogen, PPP1CC catalytic subunit of PP1 and PYGL. Associates with glycogen particles. Forms complexes with debranching enzyme, glycogen phosphorylase, glycogen synthase and phosphorylase kinase which is necessary for its regulation of PP1 activity.

Functionally, acts as a glycogen-targeting subunit for phosphatase PP1. Facilitates interaction of the PP1 with enzymes of the glycogen metabolism and regulates its activity. Suppresses the rate at which PP1 dephosphorylates (inactivates) glycogen phosphorylase and enhances the rate at which it activates glycogen synthase and therefore limits glycogen breakdown. In Xenopus laevis (African clawed frog), this protein is Protein phosphatase 1 regulatory subunit 3B-A (ppp1r3b-a).